Reading from the N-terminus, the 523-residue chain is Tryptamine 5-hydroxylase (523 aa).

A helical transmembrane segment spans residues 5 to 25 (MASTMSLALLVLSAAYVLVAL). Heme is bound at residue Cys-453.

The protein belongs to the cytochrome P450 family. Requires heme as cofactor.

It is found in the endoplasmic reticulum membrane. It carries out the reaction tryptamine + reduced [NADPH--hemoprotein reductase] + O2 = serotonin + oxidized [NADPH--hemoprotein reductase] + H2O + H(+). In terms of biological role, involved in serotonin biosynthesis. Catalyzes the conversion of tryptamine to serotonin. Accumulation of serotonin may play a role in innate immunity. The polypeptide is Tryptamine 5-hydroxylase (Oryza sativa subsp. japonica (Rice)).